The primary structure comprises 274 residues: Proteasome subunit beta (274 aa).

Residues 1–52 (MADPMGGAGRLPAVFMTPGTSSFTDFLSQSAPHLLPGARGGLPGPVTEVAHG) constitute a propeptide, removed in mature form; by autocatalysis. The Nucleophile role is filled by threonine 53.

It belongs to the peptidase T1B family. The 20S proteasome core is composed of 14 alpha and 14 beta subunits that assemble into four stacked heptameric rings, resulting in a barrel-shaped structure. The two inner rings, each composed of seven catalytic beta subunits, are sandwiched by two outer rings, each composed of seven alpha subunits. The catalytic chamber with the active sites is on the inside of the barrel. Has a gated structure, the ends of the cylinder being occluded by the N-termini of the alpha-subunits. Is capped by the proteasome-associated ATPase, ARC.

The protein resides in the cytoplasm. It catalyses the reaction Cleavage of peptide bonds with very broad specificity.. It functions in the pathway protein degradation; proteasomal Pup-dependent pathway. Its activity is regulated as follows. The formation of the proteasomal ATPase ARC-20S proteasome complex, likely via the docking of the C-termini of ARC into the intersubunit pockets in the alpha-rings, may trigger opening of the gate for substrate entry. Interconversion between the open-gate and close-gate conformations leads to a dynamic regulation of the 20S proteasome proteolysis activity. Component of the proteasome core, a large protease complex with broad specificity involved in protein degradation. The polypeptide is Proteasome subunit beta (Frankia alni (strain DSM 45986 / CECT 9034 / ACN14a)).